The following is a 64-amino-acid chain: Small ribosomal subunit protein eS17 (64 aa).

The protein belongs to the eukaryotic ribosomal protein eS17 family.

The polypeptide is Small ribosomal subunit protein eS17 (Methanosarcina acetivorans (strain ATCC 35395 / DSM 2834 / JCM 12185 / C2A)).